The following is a 252-amino-acid chain: Imidazole glycerol phosphate synthase subunit HisF (252 aa).

Residues Asp11 and Asp130 contribute to the active site.

This sequence belongs to the HisA/HisF family. Heterodimer of HisH and HisF.

It localises to the cytoplasm. The enzyme catalyses 5-[(5-phospho-1-deoxy-D-ribulos-1-ylimino)methylamino]-1-(5-phospho-beta-D-ribosyl)imidazole-4-carboxamide + L-glutamine = D-erythro-1-(imidazol-4-yl)glycerol 3-phosphate + 5-amino-1-(5-phospho-beta-D-ribosyl)imidazole-4-carboxamide + L-glutamate + H(+). Its pathway is amino-acid biosynthesis; L-histidine biosynthesis; L-histidine from 5-phospho-alpha-D-ribose 1-diphosphate: step 5/9. IGPS catalyzes the conversion of PRFAR and glutamine to IGP, AICAR and glutamate. The HisF subunit catalyzes the cyclization activity that produces IGP and AICAR from PRFAR using the ammonia provided by the HisH subunit. The sequence is that of Imidazole glycerol phosphate synthase subunit HisF from Bacillus mycoides (strain KBAB4) (Bacillus weihenstephanensis).